A 145-amino-acid polypeptide reads, in one-letter code: D-aminoacyl-tRNA deacylase (145 aa).

Positions 137–138 match the Gly-cisPro motif, important for rejection of L-amino acids motif; sequence GP.

It belongs to the DTD family. As to quaternary structure, homodimer.

Its subcellular location is the cytoplasm. It catalyses the reaction glycyl-tRNA(Ala) + H2O = tRNA(Ala) + glycine + H(+). The catalysed reaction is a D-aminoacyl-tRNA + H2O = a tRNA + a D-alpha-amino acid + H(+). Its function is as follows. An aminoacyl-tRNA editing enzyme that deacylates mischarged D-aminoacyl-tRNAs. Also deacylates mischarged glycyl-tRNA(Ala), protecting cells against glycine mischarging by AlaRS. Acts via tRNA-based rather than protein-based catalysis; rejects L-amino acids rather than detecting D-amino acids in the active site. By recycling D-aminoacyl-tRNA to D-amino acids and free tRNA molecules, this enzyme counteracts the toxicity associated with the formation of D-aminoacyl-tRNA entities in vivo and helps enforce protein L-homochirality. This is D-aminoacyl-tRNA deacylase from Lactobacillus helveticus (strain DPC 4571).